A 154-amino-acid chain; its full sequence is Phospholipase A2 OS1 (154 aa).

A signal peptide spans 1-27; sequence MHPAHLLVLLAVCVSLLGAARIPPLPL. Cystine bridges form between cysteine 38/cysteine 104, cysteine 54/cysteine 153, cysteine 56/cysteine 72, cysteine 71/cysteine 132, cysteine 78/cysteine 125, cysteine 88/cysteine 118, and cysteine 111/cysteine 123. Ca(2+) is bound by residues glycine 57 and glycine 59. Histidine 75 is a catalytic residue. A Ca(2+)-binding site is contributed by aspartate 76. Aspartate 126 is a catalytic residue.

The protein belongs to the phospholipase A2 family. Group I subfamily. D49 sub-subfamily. In terms of assembly, monomer. It depends on Ca(2+) as a cofactor. In terms of tissue distribution, expressed by the venom gland.

It is found in the secreted. It carries out the reaction a 1,2-diacyl-sn-glycero-3-phosphocholine + H2O = a 1-acyl-sn-glycero-3-phosphocholine + a fatty acid + H(+). Its function is as follows. Snake venom phospholipase A2 (PLA2) that has a low specific activity on phospholipid substrates, and is neither neurotoxic, nor myotoxic. Induces endothelial cell migration which is mediated, at least in part, by its hydrolytic products. Shows antimalarial activity, but is not able to potently inhibit HIV-1 replication. Binds in a calcium-independent fashion with very high affinity to a muscle-type (M-type) PLA2 receptor, but is a very poor ligand for neuronal-type (N-type) receptors. PLA2 catalyzes the calcium-dependent hydrolysis of the 2-acyl groups in 3-sn-phosphoglycerides. The chain is Phospholipase A2 OS1 from Oxyuranus scutellatus scutellatus (Australian taipan).